A 229-amino-acid chain; its full sequence is Protein FAM3C (229 aa).

The signal sequence occupies residues 1–24; sequence MRIAGAIKFVIAVALFLLTFYVIS. Cystine bridges form between Cys59/Cys87 and Cys65/Cys222. In terms of domain architecture, GG-type lectin spans 68–226; the sequence is KHFAFKIASG…VEMEGCIPQK (159 aa).

This sequence belongs to the FAM3 family.

It is found in the secreted. Functionally, involved in retinal laminar formation. The polypeptide is Protein FAM3C (fam3c) (Xenopus tropicalis (Western clawed frog)).